A 230-amino-acid chain; its full sequence is Cytidylate kinase (230 aa).

12–20 (GPSGAGKGT) lines the ATP pocket.

Belongs to the cytidylate kinase family. Type 1 subfamily.

Its subcellular location is the cytoplasm. The enzyme catalyses CMP + ATP = CDP + ADP. It carries out the reaction dCMP + ATP = dCDP + ADP. The polypeptide is Cytidylate kinase (Shewanella piezotolerans (strain WP3 / JCM 13877)).